The following is a 553-amino-acid chain: Methyl-coenzyme M reductase II subunit alpha (553 aa).

Q150 is a coenzyme F430 binding site. Coenzyme B-binding positions include R228, 259 to 260 (KH), and R273. H260 bears the Pros-methylhistidine mark. Position 274 is a 5-methylarginine (R274). Y335 serves as a coordination point for coenzyme M. The residue at position 402 (Q402) is a 2-methylglutamine. Y446 contacts coenzyme M. Position 447 is a 1-thioglycine (G447). D452 carries the (Z)-2,3-didehydroaspartate modification. Position 454 is an S-methylcysteine (C454).

This sequence belongs to the methyl-coenzyme M reductase alpha subunit family. In terms of assembly, MCR is a hexamer of two alpha, two beta, and two gamma chains, forming a dimer of heterotrimers. Coenzyme F430 is required as a cofactor. The alpha subunit contains six modified amino acids near the active site region. Is methylated on His-260, Arg-274, Gln-402 and Cys-454, probably by the action of specific S-adenosylmethionine-dependent methyltransferases. Also contains a thioglycine at position 447, forming a thiopeptide bond. Contains a didehydroaspartate residue at position 452. The methylation on C5 of Arg-274 is a post-translational methylation not essential in vivo, but which plays a role for the stability and structural integrity of MCR.

The catalysed reaction is coenzyme B + methyl-coenzyme M = methane + coenzyme M-coenzyme B heterodisulfide. It participates in one-carbon metabolism; methyl-coenzyme M reduction; methane from methyl-coenzyme M: step 1/1. In terms of biological role, component of the methyl-coenzyme M reductase (MCR) I that catalyzes the reductive cleavage of methyl-coenzyme M (CoM-S-CH3 or 2-(methylthio)ethanesulfonate) using coenzyme B (CoB or 7-mercaptoheptanoylthreonine phosphate) as reductant which results in the production of methane and the mixed heterodisulfide of CoB and CoM (CoM-S-S-CoB). This is the final step in methanogenesis. The sequence is that of Methyl-coenzyme M reductase II subunit alpha (mrtA) from Methanothermobacter marburgensis (strain ATCC BAA-927 / DSM 2133 / JCM 14651 / NBRC 100331 / OCM 82 / Marburg) (Methanobacterium thermoautotrophicum).